The sequence spans 260 residues: Imidazole glycerol phosphate synthase subunit HisF (260 aa).

Catalysis depends on residues D11 and D130.

It belongs to the HisA/HisF family. In terms of assembly, heterodimer of HisH and HisF.

It localises to the cytoplasm. It carries out the reaction 5-[(5-phospho-1-deoxy-D-ribulos-1-ylimino)methylamino]-1-(5-phospho-beta-D-ribosyl)imidazole-4-carboxamide + L-glutamine = D-erythro-1-(imidazol-4-yl)glycerol 3-phosphate + 5-amino-1-(5-phospho-beta-D-ribosyl)imidazole-4-carboxamide + L-glutamate + H(+). It functions in the pathway amino-acid biosynthesis; L-histidine biosynthesis; L-histidine from 5-phospho-alpha-D-ribose 1-diphosphate: step 5/9. Its function is as follows. IGPS catalyzes the conversion of PRFAR and glutamine to IGP, AICAR and glutamate. The HisF subunit catalyzes the cyclization activity that produces IGP and AICAR from PRFAR using the ammonia provided by the HisH subunit. The sequence is that of Imidazole glycerol phosphate synthase subunit HisF from Caulobacter sp. (strain K31).